Reading from the N-terminus, the 259-residue chain is Thiazole synthase (259 aa).

K100 functions as the Schiff-base intermediate with DXP in the catalytic mechanism. 1-deoxy-D-xylulose 5-phosphate is bound by residues G161, 187 to 188, and 209 to 210; these read AG and NT.

The protein belongs to the ThiG family. Homotetramer. Forms heterodimers with either ThiH or ThiS.

Its subcellular location is the cytoplasm. It carries out the reaction [ThiS sulfur-carrier protein]-C-terminal-Gly-aminoethanethioate + 2-iminoacetate + 1-deoxy-D-xylulose 5-phosphate = [ThiS sulfur-carrier protein]-C-terminal Gly-Gly + 2-[(2R,5Z)-2-carboxy-4-methylthiazol-5(2H)-ylidene]ethyl phosphate + 2 H2O + H(+). It participates in cofactor biosynthesis; thiamine diphosphate biosynthesis. Its function is as follows. Catalyzes the rearrangement of 1-deoxy-D-xylulose 5-phosphate (DXP) to produce the thiazole phosphate moiety of thiamine. Sulfur is provided by the thiocarboxylate moiety of the carrier protein ThiS. In vitro, sulfur can be provided by H(2)S. This Halalkalibacterium halodurans (strain ATCC BAA-125 / DSM 18197 / FERM 7344 / JCM 9153 / C-125) (Bacillus halodurans) protein is Thiazole synthase.